A 377-amino-acid polypeptide reads, in one-letter code: Succinyl-diaminopimelate desuccinylase (377 aa).

His-66 is a binding site for Zn(2+). Residue Asp-68 is part of the active site. Asp-99 lines the Zn(2+) pocket. The Proton acceptor role is filled by Glu-133. Residues Glu-134, Glu-163, and His-349 each contribute to the Zn(2+) site.

This sequence belongs to the peptidase M20A family. DapE subfamily. In terms of assembly, homodimer. Requires Zn(2+) as cofactor. Co(2+) serves as cofactor.

The enzyme catalyses N-succinyl-(2S,6S)-2,6-diaminopimelate + H2O = (2S,6S)-2,6-diaminopimelate + succinate. It participates in amino-acid biosynthesis; L-lysine biosynthesis via DAP pathway; LL-2,6-diaminopimelate from (S)-tetrahydrodipicolinate (succinylase route): step 3/3. Its function is as follows. Catalyzes the hydrolysis of N-succinyl-L,L-diaminopimelic acid (SDAP), forming succinate and LL-2,6-diaminopimelate (DAP), an intermediate involved in the bacterial biosynthesis of lysine and meso-diaminopimelic acid, an essential component of bacterial cell walls. The protein is Succinyl-diaminopimelate desuccinylase of Legionella pneumophila (strain Paris).